Consider the following 467-residue polypeptide: Argininosuccinate lyase (467 aa).

The protein belongs to the lyase 1 family. Argininosuccinate lyase subfamily.

It localises to the cytoplasm. It catalyses the reaction 2-(N(omega)-L-arginino)succinate = fumarate + L-arginine. The protein operates within amino-acid biosynthesis; L-arginine biosynthesis; L-arginine from L-ornithine and carbamoyl phosphate: step 3/3. This Campylobacter curvus (strain 525.92) protein is Argininosuccinate lyase.